A 448-amino-acid chain; its full sequence is Methionine aminopeptidase 2-1 (448 aa).

The tract at residues 1 to 90 (MAAQASEKLE…PPRVPVSSLF (90 aa)) is disordered. Residues 22–33 (AAGPAKAGQADA) are compositionally biased toward low complexity. Over residues 34-46 (GEVEDESDDDADD) the composition is skewed to acidic residues. Positions 47–58 (AGAAADGAANGA) are enriched in low complexity. Over residues 59–74 (AKKKKKRKSKKKKKGG) the composition is skewed to basic residues. The segment covering 75–88 (AKVQSSPPRVPVSS) has biased composition (low complexity). His-198 contributes to the substrate binding site. Residues Asp-218, Asp-229, and His-301 each coordinate a divalent metal cation. Substrate is bound at residue His-309. Residues Glu-334 and Glu-429 each coordinate a divalent metal cation.

This sequence belongs to the peptidase M24A family. Methionine aminopeptidase eukaryotic type 2 subfamily. Co(2+) serves as cofactor. The cofactor is Zn(2+). Requires Mn(2+) as cofactor. It depends on Fe(2+) as a cofactor.

Its subcellular location is the cytoplasm. The enzyme catalyses Release of N-terminal amino acids, preferentially methionine, from peptides and arylamides.. Cotranslationally removes the N-terminal methionine from nascent proteins. The N-terminal methionine is often cleaved when the second residue in the primary sequence is small and uncharged (Met-Ala-, Cys, Gly, Pro, Ser, Thr, or Val). The protein is Methionine aminopeptidase 2-1 of Emericella nidulans (strain FGSC A4 / ATCC 38163 / CBS 112.46 / NRRL 194 / M139) (Aspergillus nidulans).